Here is a 210-residue protein sequence, read N- to C-terminus: Fibrillarin-like rRNA/tRNA 2'-O-methyltransferase (210 aa).

S-adenosyl-L-methionine-binding positions include 70-71 (TT), 88-89 (EY), 113-114 (DA), and 133-136 (DIAQ).

The protein belongs to the methyltransferase superfamily. Fibrillarin family. Interacts with nop5. Component of box C/D small ribonucleoprotein (sRNP) particles that contain rpl7ae, FlpA and nop5, plus a guide RNA.

Functionally, involved in pre-rRNA and tRNA processing. Utilizes the methyl donor S-adenosyl-L-methionine to catalyze the site-specific 2'-hydroxyl methylation of ribose moieties in rRNA and tRNA. Site specificity is provided by a guide RNA that base pairs with the substrate. Methylation occurs at a characteristic distance from the sequence involved in base pairing with the guide RNA. This Archaeoglobus fulgidus (strain ATCC 49558 / DSM 4304 / JCM 9628 / NBRC 100126 / VC-16) protein is Fibrillarin-like rRNA/tRNA 2'-O-methyltransferase.